The sequence spans 655 residues: Fructose-1,6-bisphosphatase class 3 (655 aa).

This sequence belongs to the FBPase class 3 family. Mn(2+) is required as a cofactor.

The enzyme catalyses beta-D-fructose 1,6-bisphosphate + H2O = beta-D-fructose 6-phosphate + phosphate. It functions in the pathway carbohydrate biosynthesis; gluconeogenesis. This is Fructose-1,6-bisphosphatase class 3 from Porphyromonas gingivalis (strain ATCC 33277 / DSM 20709 / CIP 103683 / JCM 12257 / NCTC 11834 / 2561).